We begin with the raw amino-acid sequence, 401 residues long: Argininosuccinate synthase (401 aa).

Residues Ala11–Ser19 and Ala38 contribute to the ATP site. Tyr89 and Ser94 together coordinate L-citrulline. Residue Gly119 participates in ATP binding. 3 residues coordinate L-aspartate: Thr121, Asn125, and Asp126. Asn125 is an L-citrulline binding site. Residues Arg129, Ser177, Ser186, Glu262, and Tyr274 each coordinate L-citrulline.

Belongs to the argininosuccinate synthase family. Type 1 subfamily. In terms of assembly, homotetramer.

The protein localises to the cytoplasm. The catalysed reaction is L-citrulline + L-aspartate + ATP = 2-(N(omega)-L-arginino)succinate + AMP + diphosphate + H(+). It participates in amino-acid biosynthesis; L-arginine biosynthesis; L-arginine from L-ornithine and carbamoyl phosphate: step 2/3. The sequence is that of Argininosuccinate synthase from Nitratidesulfovibrio vulgaris (strain DSM 19637 / Miyazaki F) (Desulfovibrio vulgaris).